Consider the following 333-residue polypeptide: Glycerol-3-phosphate dehydrogenase [NAD(P)+] (333 aa).

Residues F19, R40, R41, and K113 each contribute to the NADPH site. Sn-glycerol 3-phosphate contacts are provided by K113 and G141. NADPH is bound at residue A145. Positions 196, 249, 259, 260, and 261 each coordinate sn-glycerol 3-phosphate. K196 (proton acceptor) is an active-site residue. Position 260 (R260) interacts with NADPH. Positions 282 and 283 each coordinate NADPH.

It belongs to the NAD-dependent glycerol-3-phosphate dehydrogenase family.

It is found in the cytoplasm. It catalyses the reaction sn-glycerol 3-phosphate + NAD(+) = dihydroxyacetone phosphate + NADH + H(+). It carries out the reaction sn-glycerol 3-phosphate + NADP(+) = dihydroxyacetone phosphate + NADPH + H(+). It participates in membrane lipid metabolism; glycerophospholipid metabolism. In terms of biological role, catalyzes the reduction of the glycolytic intermediate dihydroxyacetone phosphate (DHAP) to sn-glycerol 3-phosphate (G3P), the key precursor for phospholipid synthesis. The chain is Glycerol-3-phosphate dehydrogenase [NAD(P)+] from Sinorhizobium fredii (strain NBRC 101917 / NGR234).